The following is a 448-amino-acid chain: Argininosuccinate synthase (448 aa).

ATP contacts are provided by residues 17–25 (AFSGGLDTS) and Ala43. An L-citrulline-binding site is contributed by Tyr99. ATP is bound by residues Gly129 and Thr131. L-aspartate contacts are provided by Thr131, Asn135, and Asp136. Asn135 is a binding site for L-citrulline. Asp136 is a binding site for ATP. 2 residues coordinate L-citrulline: Arg139 and Ser192. Asp194 lines the ATP pocket. L-citrulline contacts are provided by Thr201, Glu203, and Glu280.

The protein belongs to the argininosuccinate synthase family. Type 2 subfamily. Homotetramer.

It localises to the cytoplasm. The enzyme catalyses L-citrulline + L-aspartate + ATP = 2-(N(omega)-L-arginino)succinate + AMP + diphosphate + H(+). Its pathway is amino-acid biosynthesis; L-arginine biosynthesis; L-arginine from L-ornithine and carbamoyl phosphate: step 2/3. This is Argininosuccinate synthase from Pectobacterium atrosepticum (strain SCRI 1043 / ATCC BAA-672) (Erwinia carotovora subsp. atroseptica).